The following is a 249-amino-acid chain: 1-(5-phosphoribosyl)-5-[(5-phosphoribosylamino)methylideneamino] imidazole-4-carboxamide isomerase (249 aa).

The Proton acceptor role is filled by Asp11. The active-site Proton donor is the Asp133.

The protein belongs to the HisA/HisF family.

It is found in the cytoplasm. The enzyme catalyses 1-(5-phospho-beta-D-ribosyl)-5-[(5-phospho-beta-D-ribosylamino)methylideneamino]imidazole-4-carboxamide = 5-[(5-phospho-1-deoxy-D-ribulos-1-ylimino)methylamino]-1-(5-phospho-beta-D-ribosyl)imidazole-4-carboxamide. It functions in the pathway amino-acid biosynthesis; L-histidine biosynthesis; L-histidine from 5-phospho-alpha-D-ribose 1-diphosphate: step 4/9. The sequence is that of 1-(5-phosphoribosyl)-5-[(5-phosphoribosylamino)methylideneamino] imidazole-4-carboxamide isomerase from Mannheimia succiniciproducens (strain KCTC 0769BP / MBEL55E).